The chain runs to 293 residues: Ribosomal protein L11 methyltransferase (293 aa).

S-adenosyl-L-methionine is bound by residues Thr-145, Gly-166, Asp-188, and Asn-230.

It belongs to the methyltransferase superfamily. PrmA family.

It is found in the cytoplasm. The enzyme catalyses L-lysyl-[protein] + 3 S-adenosyl-L-methionine = N(6),N(6),N(6)-trimethyl-L-lysyl-[protein] + 3 S-adenosyl-L-homocysteine + 3 H(+). In terms of biological role, methylates ribosomal protein L11. The protein is Ribosomal protein L11 methyltransferase of Shewanella sp. (strain ANA-3).